Consider the following 340-residue polypeptide: 3-isopropylmalate dehydrogenase (340 aa).

Substrate contacts are provided by arginine 88, arginine 98, arginine 122, and aspartate 212. Positions 212, 236, and 240 each coordinate Mg(2+). Glycine 272–aspartate 284 contacts NAD(+).

Belongs to the isocitrate and isopropylmalate dehydrogenases family. LeuB type 2 subfamily. Homodimer. It depends on Mg(2+) as a cofactor. Mn(2+) serves as cofactor.

It is found in the cytoplasm. The enzyme catalyses (2R,3S)-3-isopropylmalate + NAD(+) = 4-methyl-2-oxopentanoate + CO2 + NADH. Its pathway is amino-acid biosynthesis; L-leucine biosynthesis; L-leucine from 3-methyl-2-oxobutanoate: step 3/4. Its function is as follows. Catalyzes the oxidation of 3-carboxy-2-hydroxy-4-methylpentanoate (3-isopropylmalate) to 3-carboxy-4-methyl-2-oxopentanoate. The product decarboxylates to 4-methyl-2 oxopentanoate. In Corynebacterium efficiens (strain DSM 44549 / YS-314 / AJ 12310 / JCM 11189 / NBRC 100395), this protein is 3-isopropylmalate dehydrogenase.